The primary structure comprises 170 residues: Lipoprotein signal peptidase (170 aa).

The next 3 membrane-spanning stretches (helical) occupy residues 12 to 32 (WYWV…WVLS), 67 to 87 (WQRW…SVWL), and 94 to 116 (MWRL…IDRL). Active-site residues include aspartate 123 and aspartate 141. The chain crosses the membrane as a helical span at residues 133-153 (HFPAFNIADSAICVGAALIIL).

This sequence belongs to the peptidase A8 family.

The protein resides in the cell inner membrane. It catalyses the reaction Release of signal peptides from bacterial membrane prolipoproteins. Hydrolyzes -Xaa-Yaa-Zaa-|-(S,diacylglyceryl)Cys-, in which Xaa is hydrophobic (preferably Leu), and Yaa (Ala or Ser) and Zaa (Gly or Ala) have small, neutral side chains.. The protein operates within protein modification; lipoprotein biosynthesis (signal peptide cleavage). This protein specifically catalyzes the removal of signal peptides from prolipoproteins. The polypeptide is Lipoprotein signal peptidase (Shewanella halifaxensis (strain HAW-EB4)).